A 536-amino-acid chain; its full sequence is Octopamine receptor beta-2R (536 aa).

The interval M1 to R26 is disordered. Residues M1–A157 lie on the Extracellular side of the membrane. Over residues Q14 to R26 the composition is skewed to basic residues. N18, N92, N113, and N126 each carry an N-linked (GlcNAc...) asparagine glycan. The helical transmembrane segment at F158–V178 threads the bilayer. Residues M179 to Y190 are Cytoplasmic-facing. Residues F191 to F211 traverse the membrane as a helical segment. At S212–D233 the chain is on the extracellular side. A helical transmembrane segment spans residues V234 to V256. The Cytoplasmic portion of the chain corresponds to K257–V270. A helical membrane pass occupies residues G271–I291. Over G292–V320 the chain is Extracellular. A helical membrane pass occupies residues I321–I341. At F342–T412 the chain is on the cytoplasmic side. A helical membrane pass occupies residues L413 to L433. Residues S434 to D444 are Extracellular-facing. A helical membrane pass occupies residues I445–Y465. Topologically, residues A466–L536 are cytoplasmic.

The protein belongs to the G-protein coupled receptor 1 family. In the adult, expressed in the superior protocerebrum and the optic lobe medulla of the central nervous system, nurse cells of egg chambers in the ovary at oogenic stages 1-10, and spermatogonia and spermatocytes in the testis. Expressed in the oviduct epithelium. Also expressed in the spermatheca. Expressed in embryonic and larval ventral nerve cord and brain lobe, embryonic and larval salivary glands and larval imaginal disk and midgut. Also expressed in larval synaptic boutons.

It is found in the cell membrane. Its function is as follows. Autoreceptor for octopamine (OA), which is a neurotransmitter, neurohormone, and neuromodulator in invertebrates. Essential for ovulation and fertilization. During ovulation it mediates the OA-induced relaxation of the oviduct visceral muscles, by increasing cAMP levels and activating effectors such as calmodulin-dependent kinase II (CaMKII) and cAMP-dependent protein kinase A (PKA) pathways. Positively regulates synaptic growth; an action that is antagonized by Octbeta1R. This chain is Octopamine receptor beta-2R, found in Drosophila melanogaster (Fruit fly).